A 276-amino-acid polypeptide reads, in one-letter code: Large ribosomal subunit protein uL2 (276 aa).

Disordered stretches follow at residues Arg-14–His-58 and Thr-221–Lys-276. Over residues Ala-16–Ser-27 the composition is skewed to polar residues. Basic residues predominate over residues Arg-255–Lys-276.

Belongs to the universal ribosomal protein uL2 family. As to quaternary structure, part of the 50S ribosomal subunit. Forms a bridge to the 30S subunit in the 70S ribosome.

Its function is as follows. One of the primary rRNA binding proteins. Required for association of the 30S and 50S subunits to form the 70S ribosome, for tRNA binding and peptide bond formation. It has been suggested to have peptidyltransferase activity; this is somewhat controversial. Makes several contacts with the 16S rRNA in the 70S ribosome. The chain is Large ribosomal subunit protein uL2 from Bifidobacterium longum subsp. infantis (strain ATCC 15697 / DSM 20088 / JCM 1222 / NCTC 11817 / S12).